The chain runs to 404 residues: Protrudin (404 aa).

The disordered stretch occupies residues 1 to 20 (MQTSEREGCGPEVSPSTVPE). The Cytoplasmic portion of the chain corresponds to 1 to 66 (MQTSEREGCG…AGDGVRYLLR (66 aa)). Residues 1–92 (MQTSEREGCG…LFLTLNEGAW (92 aa)) are sufficient for homooligomerization. Residues 1 to 205 (MQTSEREGCG…LYLLPLCWVL (205 aa)) are sufficient for localization to endoplasmic reticulum tubular network and for interactions with REEP1, REEP5, ATL1, ATL2, ATL3 and SPAST. The interval 51–64 (LEPLKDAGDGVRYL) is necessary for interaction with RAB11A and function in neurite outgrowth. Residues 67 to 87 (WQTPLCSLLTCLGLNVLFLTL) form a helical membrane-spanning segment. Position 88 (N88) is a topological domain, lumenal. The helical transmembrane segment at 89 to 109 (EGAWYSVGALMISVPALLGYL) threads the bilayer. At 110–187 (QEGCQARLSE…NPAVSSQFYG (78 aa)) the chain is on the cytoplasmic side. An intramembrane region (helical) is located at residues 188 to 208 (ALLGTVCMLYLLPLCWVLALL). The Cytoplasmic segment spans residues 209–404 (NSTLFLGNVE…CASCNQTLSK (196 aa)). Positions 234 to 286 (MNPKQEESAFESPPPSDAGGKGALVDCTPAPTPTEDLTPGSVEEAEEAEPDEE) are disordered. A necessary for interaction with KIF5A region spans residues 271-354 (TPGSVEEAEE…GCSATFSVLK (84 aa)). The segment covering 276-286 (EEAEEAEPDEE) has biased composition (acidic residues). Residues 286–292 (EFKDAIE) form a necessary for interaction with VAPA region. The segment at 337-403 (TNNYGSCTGC…VCASCNQTLS (67 aa)) adopts an FYVE-type zinc-finger fold. Residues C343, C346, C359, C362, C367, C370, C395, and C398 each contribute to the Zn(2+) site.

As to quaternary structure, can form homooligomers (monomers, dimers and tetramers). Interacts with RAB11A (GDP-bound form); regulates RAB11A. Interacts with FKBP8; may negatively regulate ZFYVE27 phosphorylation. Interacts with VAPA (via MSP domain); may regulate ZFYVE27 retention in the endoplasmic reticulum and its function in cell projections formation. Interacts with VAPB (via MSP domain). Interacts with RAB11B (GDP-bound form), REEP1, REEP5, ATL1, ATL2, ATL3, SPAST, SURF4, KIF5A, KIF5B, KIF5C and RTN3. In terms of processing, phosphorylated. Phosphorylation is induced by NGF through the MAPK/ERK pathway and modulates interaction with RAB11A.

The protein resides in the recycling endosome membrane. It localises to the endoplasmic reticulum membrane. It is found in the cell projection. Its subcellular location is the growth cone membrane. Functionally, key regulator of RAB11-dependent vesicular trafficking during neurite extension through polarized membrane transport. Promotes axonal elongation and contributes to the establishment of neuronal cell polarity. Involved in nerve growth factor-induced neurite formation in VAPA-dependent manner. Contributes to both the formation and stabilization of the tubular ER network. Involved in ER morphogenesis by regulating the sheet-to-tubule balance and possibly the density of tubule interconnections. Acts as an adapter protein that facilitates the interaction of KIF5A with VAPA, VAPB, SURF4, RAB11A, RAB11B and RTN3 and the ZFYVE27-KIF5A complex contributes to the transport of these proteins in neurons. Can induce formation of neurite-like membrane protrusions in non-neuronal cells in a KIF5A/B-dependent manner. The protein is Protrudin (ZFYVE27) of Bos taurus (Bovine).